The primary structure comprises 333 residues: Autoinducer 2 import system permease protein LsrD (333 aa).

Helical transmembrane passes span 7-27, 45-65, 70-90, 91-111, 118-138, 162-182, 212-232, 240-260, 261-281, and 288-308; these read YGWE…FGIA, ICIG…GIDI, TIGL…PMAA, AIPL…ALIL, LVIT…LSGI, LFGL…CWLF, TLYL…IVLV, SDLG…GGAN, IYGG…IGYL, and AGVP…IAVV.

It belongs to the binding-protein-dependent transport system permease family. AraH/RbsC subfamily. The complex is composed of two ATP-binding proteins (LsrA), two transmembrane proteins (LsrC and LsrD) and a solute-binding protein (LsrB).

Its subcellular location is the cell inner membrane. In terms of biological role, part of the ABC transporter complex LsrABCD involved in autoinducer 2 (AI-2) import. Probably responsible for the translocation of the substrate across the membrane. The chain is Autoinducer 2 import system permease protein LsrD (lsrD) from Photorhabdus laumondii subsp. laumondii (strain DSM 15139 / CIP 105565 / TT01) (Photorhabdus luminescens subsp. laumondii).